The following is a 293-amino-acid chain: 5'-3' exoribonuclease Rnm (293 aa).

Residues His-17, His-19, Asp-24, His-49, Glu-76, His-87, His-202, Asp-259, and His-261 each contribute to the Mn(2+) site.

This sequence belongs to the PHP family. TrpH/YciV subfamily. The cofactor is Mn(2+).

The catalysed reaction is a ribonucleoside 3',5'-bisphosphate + H2O = a ribonucleoside 5'-phosphate + phosphate. In terms of biological role, exoribonuclease that catalyzes the last steps of 5S, 16S and 23S rRNA 5'-end maturation. Removes 3 nucleotides (nt) from the 5' end of 5S, 16S and 23S rRNA precursors to generate the mature 5' ends. 5S and 23S rRNA maturation occurs more efficiently and accurately on ribosomal particles as compared to free RNA. Efficiently catalyzes the hydrolysis of the 3'-phosphate from 3',5'-bis-phosphonucleotides as well as the successive hydrolysis of 5'-phosphomononucleotides from the 5'-end of short pieces of RNA and DNA, with no specificity toward the identity of the nucleotide base. Is more efficient at hydrolyzing RNA oligonucleotides than DNA oligonucleotides. This enzyme can also hydrolyze annealed DNA duplexes, albeit at a catalytic efficiency lower than that of the corresponding single-stranded oligonucleotides. This is 5'-3' exoribonuclease Rnm from Salmonella typhimurium (strain LT2 / SGSC1412 / ATCC 700720).